A 670-amino-acid chain; its full sequence is Probable beta-glucosidase N (670 aa).

An N-terminal signal peptide occupies residues 1-21 (MHSNILPVLTSVATLLGLVQG). N-linked (GlcNAc...) asparagine glycosylation occurs at asparagine 51. Residues 65–87 (FEPSDGVRSVQGSGKDYDNPAMR) are disordered. Asparagine 141 carries an N-linked (GlcNAc...) asparagine glycan. Aspartate 152 is an active-site residue. N-linked (GlcNAc...) asparagine glycans are attached at residues asparagine 184, asparagine 248, asparagine 330, and asparagine 417.

Belongs to the glycosyl hydrolase 3 family.

The protein localises to the secreted. The enzyme catalyses Hydrolysis of terminal, non-reducing beta-D-glucosyl residues with release of beta-D-glucose.. It participates in glycan metabolism; cellulose degradation. Beta-glucosidases are one of a number of cellulolytic enzymes involved in the degradation of cellulosic biomass. Catalyzes the last step releasing glucose from the inhibitory cellobiose. This chain is Probable beta-glucosidase N (bglN), found in Emericella nidulans (strain FGSC A4 / ATCC 38163 / CBS 112.46 / NRRL 194 / M139) (Aspergillus nidulans).